We begin with the raw amino-acid sequence, 1772 residues long: Merozoite surface protein 1 (1772 aa).

The N-terminal stretch at Met1–Lys18 is a signal peptide. N-linked (GlcNAc...) asparagine glycosylation occurs at Asn54. Residues Thr290–Gly319 form a disordered region. Residues Ala305–Gly319 show a composition bias toward low complexity. Residues Asn406 and Asn646 are each glycosylated (N-linked (GlcNAc...) asparagine). The interval Lys703 to Thr796 is disordered. Residues Ser724 to Thr796 are compositionally biased toward low complexity. N-linked (GlcNAc...) asparagine glycosylation occurs at Asn829. Residues Ala924 to Pro1070 are disordered. Composition is skewed to low complexity over residues Thr930–Gln946 and Ser956–Ser1052. Asn1018 and Asn1090 each carry an N-linked (GlcNAc...) asparagine glycan. The segment at Gly1362–Asp1383 is disordered. N-linked (GlcNAc...) asparagine glycosylation is found at Asn1408, Asn1446, Asn1541, and Asn1629. EGF-like domains lie at His1661 to Asn1703 and Asn1704 to Ser1752. A disulfide bond links Cys1663 and Cys1675. Asn1680 carries an N-linked (GlcNAc...) asparagine glycan. Cystine bridges form between Cys1687/Cys1699, Cys1707/Cys1720, Cys1714/Cys1734, and Cys1736/Cys1750. Ser1751 carries the GPI-anchor amidated serine lipid modification. The propeptide at Ser1752–Phe1772 is removed in mature form.

As to quaternary structure, forms a complex composed of subunits p83, p30, p38, and p42 which remain non-covalently associated; the complex is formed at the merozoite surface prior to egress from host erythrocytes. In terms of processing, the p230 precursor is cleaved by SUB1 prior to merozoite egress into 4 subunits p83, p30, p38, and p42 which remain non-covalently associated. In a second processing step during erythrocyte invasion, p42 is cleaved by SUB2 into p33 and p19; the latter remains attached to the merozoite surface via its GPI-anchor and stays on the surface during the subsequent ring stage.

The protein localises to the cell membrane. Its subcellular location is the secreted. Its function is as follows. During the asexual blood stage, involved in merozoite egress from host erythrocytes possibly via its interaction with the host cytoskeleton protein spectrin resulting in the destabilization of the host cytoskeleton and thus leading to erythrocyte cell membrane rupture. Involved in the binding to host erythrocytes and is required for host erythrocyte invasion. The polypeptide is Merozoite surface protein 1 (Plasmodium yoelii yoelii).